Reading from the N-terminus, the 190-residue chain is Potassium-transporting ATPase KdpC subunit (190 aa).

Residues 13-33 (IGFLLLTLVCGVLYPGVVTVF) traverse the membrane as a helical segment.

This sequence belongs to the KdpC family. The system is composed of three essential subunits: KdpA, KdpB and KdpC.

It localises to the cell membrane. Functionally, part of the high-affinity ATP-driven potassium transport (or Kdp) system, which catalyzes the hydrolysis of ATP coupled with the electrogenic transport of potassium into the cytoplasm. This subunit acts as a catalytic chaperone that increases the ATP-binding affinity of the ATP-hydrolyzing subunit KdpB by the formation of a transient KdpB/KdpC/ATP ternary complex. This Listeria monocytogenes serovar 1/2a (strain ATCC BAA-679 / EGD-e) protein is Potassium-transporting ATPase KdpC subunit.